Reading from the N-terminus, the 463-residue chain is uncharacterized protein (463 aa).

6 helical membrane-spanning segments follow: residues 3–23 (IPPE…SLLV), 88–108 (VAAA…AELA), 112–132 (AIHG…PIAL), 216–236 (FSPA…DFLW), 245–265 (LLLL…SALI), and 276–296 (LPIA…AVAV). The tract at residues 303–322 (VPGGSPPTSNPAPAAPSSNS) is disordered. A compositionally biased stretch (pro residues) spans 306 to 316 (GSPPTSNPAPA). 2 helical membrane-spanning segments follow: residues 323–343 (VGSA…APPG) and 419–439 (AGTL…AGMV).

It belongs to the mycobacterial PPE family.

Its subcellular location is the cell membrane. This is an uncharacterized protein from Mycobacterium tuberculosis (strain CDC 1551 / Oshkosh).